Reading from the N-terminus, the 104-residue chain is N(4)-acetylcytidine amidohydrolase (104 aa).

The ASCH domain maps to 6–94 (ITFFQRFQND…IAEIYPNQTQ (89 aa)). Residue Lys21 is the Proton acceptor of the active site. Thr24 (nucleophile) is an active-site residue. The active-site Proton donor is the Glu74.

This sequence belongs to the N(4)-acetylcytidine amidohydrolase family.

The enzyme catalyses N(4)-acetylcytidine + H2O = cytidine + acetate + H(+). The catalysed reaction is N(4)-acetyl-2'-deoxycytidine + H2O = 2'-deoxycytidine + acetate + H(+). It carries out the reaction N(4)-acetylcytosine + H2O = cytosine + acetate + H(+). Its function is as follows. Catalyzes the hydrolysis of N(4)-acetylcytidine (ac4C). This Salmonella agona (strain SL483) protein is N(4)-acetylcytidine amidohydrolase (yqfB).